We begin with the raw amino-acid sequence, 728 residues long: Phosphoribosylformylglycinamidine synthase subunit PurL (728 aa).

Residue H42 is part of the active site. Y45 and K84 together coordinate ATP. E86 lines the Mg(2+) pocket. Residues 87–90 (SHNH) and R109 contribute to the substrate site. H88 (proton acceptor) is an active-site residue. A Mg(2+)-binding site is contributed by D110. Q237 lines the substrate pocket. D265 is a Mg(2+) binding site. Residue 309–311 (ESQ) coordinates substrate. 2 residues coordinate ATP: D491 and G528. N529 provides a ligand contact to Mg(2+). S531 is a binding site for substrate.

This sequence belongs to the FGAMS family. In terms of assembly, monomer. Part of the FGAM synthase complex composed of 1 PurL, 1 PurQ and 2 PurS subunits.

Its subcellular location is the cytoplasm. The catalysed reaction is N(2)-formyl-N(1)-(5-phospho-beta-D-ribosyl)glycinamide + L-glutamine + ATP + H2O = 2-formamido-N(1)-(5-O-phospho-beta-D-ribosyl)acetamidine + L-glutamate + ADP + phosphate + H(+). It functions in the pathway purine metabolism; IMP biosynthesis via de novo pathway; 5-amino-1-(5-phospho-D-ribosyl)imidazole from N(2)-formyl-N(1)-(5-phospho-D-ribosyl)glycinamide: step 1/2. In terms of biological role, part of the phosphoribosylformylglycinamidine synthase complex involved in the purines biosynthetic pathway. Catalyzes the ATP-dependent conversion of formylglycinamide ribonucleotide (FGAR) and glutamine to yield formylglycinamidine ribonucleotide (FGAM) and glutamate. The FGAM synthase complex is composed of three subunits. PurQ produces an ammonia molecule by converting glutamine to glutamate. PurL transfers the ammonia molecule to FGAR to form FGAM in an ATP-dependent manner. PurS interacts with PurQ and PurL and is thought to assist in the transfer of the ammonia molecule from PurQ to PurL. This chain is Phosphoribosylformylglycinamidine synthase subunit PurL, found in Campylobacter jejuni subsp. jejuni serotype O:23/36 (strain 81-176).